The chain runs to 234 residues: MPTPHIEAQKGEIADKILLPGDPLRAKFIAENFLEDAVQFNQVRGMLGFTGTYKGHRVSVMGTGMGIPSISIYANELITEYGVKRLIRVGTAGSVNEDVHIRDLVIGQAAATTSAIIRNDFPDFDFPQIADFDLLDKAYHIAKDLGITTHVGNILSSDLFYGGPDAVKVGKLGVKAVEMEAAGLYYLGAKYKVQTLGIMTISDHILTGESTTSEERQLTFTDMMKVGLETLISE.

H5 provides a ligand contact to a purine D-ribonucleoside. Phosphate is bound by residues G21, R25, R44, and 88-91 (RVGT). A purine D-ribonucleoside contacts are provided by residues 178–180 (EME) and 202–203 (SD). Residue D203 is the Proton donor of the active site.

Belongs to the PNP/UDP phosphorylase family. Homohexamer; trimer of homodimers.

The enzyme catalyses a purine D-ribonucleoside + phosphate = a purine nucleobase + alpha-D-ribose 1-phosphate. It catalyses the reaction a purine 2'-deoxy-D-ribonucleoside + phosphate = a purine nucleobase + 2-deoxy-alpha-D-ribose 1-phosphate. Its function is as follows. Catalyzes the reversible phosphorolytic breakdown of the N-glycosidic bond in the beta-(deoxy)ribonucleoside molecules, with the formation of the corresponding free purine bases and pentose-1-phosphate. This is Purine nucleoside phosphorylase DeoD-type from Lactococcus lactis subsp. lactis (strain IL1403) (Streptococcus lactis).